Reading from the N-terminus, the 926-residue chain is DNA topoisomerase 3-alpha (926 aa).

One can recognise a Toprim domain in the interval 10–154 (TVLNVAEKPS…NLFIRRAHFS (145 aa)). Mg(2+) contacts are provided by E16, D123, and D125. Residues 172–604 (NQLFAEAVDA…CLQQMKACFL (433 aa)) enclose the Topo IA-type catalytic domain. Residues 219-224 (SYGPCQ) form an interaction with DNA region. Residue Y342 is the O-(5'-phospho-DNA)-tyrosine intermediate of the active site. The C4-type zinc finger occupies 642–670 (CNLCNESDMALRKNRDGNFMVGCMNYPQC). Disordered stretches follow at residues 740 to 760 (SRSQ…QGSN) and 775 to 806 (HAST…TVSC). The span at 750–760 (TAPSNNIQGSN) shows a compositional bias: polar residues. The CCHC-type 1 zinc-finger motif lies at 767–782 (CIHCQQRGHASTNCPS). Zn(2+) is bound by residues C806, C809, C831, and C836. A GRF-type zinc finger spans residues 806 to 845 (CNTCGSQCVLRTANTEANRGRQFFSCPTQGCSFFAWEDSI). The interval 849-890 (SGNATTGSNSGGSGRRGSRGRGRGGRGGQSSGGRRGSGTSFV) is disordered. Gly residues predominate over residues 873–884 (GRGGQSSGGRRG). Residues 901 to 917 (RCFSCGDPSHFANACPN) form a CCHC-type 2 zinc finger.

Belongs to the type IA topoisomerase family. As to quaternary structure, component of the RMI complex, containing at least TOP3A and RMI1. The RMI complex interacts with RECQL4A. It depends on Mg(2+) as a cofactor.

The catalysed reaction is ATP-independent breakage of single-stranded DNA, followed by passage and rejoining.. Functionally, releases the supercoiling and torsional tension of DNA introduced during the DNA replication and transcription by transiently cleaving and rejoining one strand of the DNA duplex. Introduces a single-strand break via transesterification at a target site in duplex DNA. The scissile phosphodiester is attacked by the catalytic tyrosine of the enzyme, resulting in the formation of a DNA-(5'-phosphotyrosyl)-enzyme intermediate and the expulsion of a 3'-OH DNA strand. The free DNA strand then undergoes passage around the unbroken strand thus removing DNA supercoils. Finally, in the religation step, the DNA 3'-OH attacks the covalent intermediate to expel the active-site tyrosine and restore the DNA phosphodiester backbone. Essential component of the RMI complex, a complex that plays an important role in the resolution step of homologous recombination, in a process called Holliday Junction dissolution, to limit DNA crossover formation in cells. Together with RMI1, is essential for the resolution of meiotic recombination intermediates, a step that prevents entanglement of the parental chromosomes. May have DNA decatenation activity. In Arabidopsis thaliana (Mouse-ear cress), this protein is DNA topoisomerase 3-alpha (TOP3A).